We begin with the raw amino-acid sequence, 179 residues long: Gamma-glutamyl cyclotransferase verK (179 aa).

It belongs to the class-I pyridoxal-phosphate-dependent aminotransferase family.

The catalysed reaction is an alpha-(gamma-L-glutamyl)-L-amino acid = 5-oxo-L-proline + an L-alpha-amino acid. It participates in mycotoxin biosynthesis. Gamma-glutamyl cyclotransferase; part of the gene cluster that mediates the biosynthesis of 11'-deoxyverticillin A, one of the dimeric epipolythiodioxopiperazines (ETPs) from the verticillin family that act as mycotoxins. 11'-deoxyverticillin A is required for normal conidiation. The nonribosomal peptide synthetase verP is speculated to be responsible for condensation of amino acids to form the carbon skeleton of verticillin, whereas the cluster-specific tailoring enzymes are involved in further modifications leading to the production of 11'-deoxyverticillin A. The chain is Gamma-glutamyl cyclotransferase verK from Clonostachys rogersoniana.